We begin with the raw amino-acid sequence, 260 residues long: MNDFDPTTLSSPAAIGHNLRRRPLVRKKLSEMVEEELEQMIRRREFGEGEQLPSERELMAFFNVGRPSVREALAALKRKGLVQINNGERARISRPSADTIIGELSGMAKDFLSHPGGIAHFEQLRLFFESSLVRYAAEHATDAQIALLEQTLALNSQSLDDNALFIRSDVDFHRVLAGIPGNPIFMAIHVALLDWLLAARPAVADADLYEHNNTSYQQHIEIFNAIRRHDPDQADRALQTHLNSVFASWHTLSAQSSSDE.

Positions 27-95 (KKLSEMVEEE…NGERARISRP (69 aa)) constitute an HTH gntR-type domain. The H-T-H motif DNA-binding region spans 55-74 (ERELMAFFNVGRPSVREALA).

It belongs to the NanR family.

Functionally, transcriptional repressor that controls expression of the genes required for the catabolism of sialic acids. The sequence is that of HTH-type transcriptional repressor NanR from Edwardsiella tarda (strain FL6-60).